A 225-amino-acid chain; its full sequence is Ethylene-responsive transcription factor 3 (225 aa).

Residues 1-12 show a composition bias toward low complexity; that stretch reads MRRGRAAAAPAP. Disordered regions lie at residues 1–29 and 82–193; these read MRRG…IRFR and NFPL…NIAS. Positions 27–84 form a DNA-binding region, AP2/ERF; the sequence is RFRGVRKRPWGRFAAEIRDPWKKTRVWLGTFDSAEDAARAYDAAARALRGPKAKTNFP. Low complexity predominate over residues 118-134; the sequence is SQRPTSSSMSSTVESFS. Residues 176-185 are compositionally biased toward basic and acidic residues; sequence DHGDCEKEND. The EAR-like (transcriptional repression) signature appears at 202-208; sequence FDLNLPP.

This sequence belongs to the ethylene-response factor family. Class 2 subfamily.

It localises to the nucleus. Functionally, transcription factor that binds to the GCC-box pathogenesis-related promoter element. Involved in the regulation of gene expression by stress factors and by components of stress signal transduction pathways. Probably acts as a transcriptional repressor and may regulate other AtERFs. This Nicotiana tabacum (Common tobacco) protein is Ethylene-responsive transcription factor 3 (ERF3).